Consider the following 232-residue polypeptide: MIPTSFPPREEIARLTARMLLEIEAVHFRPQEPFTLASGLPSPTYIDCRKLISYPRIRSTLMDFMAVTLLRDAGFEAFDNIAGGETAGIPFAALVAERLGLPMTYVRKKPKGYGRNARIEGVMTEGQRVLLVEDLTTDGGSKLSFVDAIRETGASCAHTAVIFYYGIFPETIGRLQAHGVTLHPLCTWWDVLAEARASGAFDAATLAEVESFLSNPRDWQDARKPADPTKSL.

5-phospho-alpha-D-ribose 1-diphosphate-binding positions include Arg-107, Lys-108, Lys-111, and 133-141 (EDLTTDGGS). Thr-137 contacts orotate.

The protein belongs to the purine/pyrimidine phosphoribosyltransferase family. PyrE subfamily. Homodimer. The cofactor is Mg(2+).

The catalysed reaction is orotidine 5'-phosphate + diphosphate = orotate + 5-phospho-alpha-D-ribose 1-diphosphate. It participates in pyrimidine metabolism; UMP biosynthesis via de novo pathway; UMP from orotate: step 1/2. In terms of biological role, catalyzes the transfer of a ribosyl phosphate group from 5-phosphoribose 1-diphosphate to orotate, leading to the formation of orotidine monophosphate (OMP). The protein is Orotate phosphoribosyltransferase of Cereibacter sphaeroides (strain KD131 / KCTC 12085) (Rhodobacter sphaeroides).